The sequence spans 524 residues: Lysophospholipid acyltransferase LPCAT4 (524 aa).

2 helical membrane passes run C40–W62 and T87–L107. The short motif at H129 to D134 is the HXXXXD motif element. A glycan (N-linked (GlcNAc...) asparagine) is linked at N152. Positions P490 to D524 are disordered. The segment covering S495–A518 has biased composition (polar residues).

It belongs to the 1-acyl-sn-glycerol-3-phosphate acyltransferase family. In terms of tissue distribution, widely expressed with much higher level in brain. Expressed in erythroleukemic cells but not in reticulocytes.

It is found in the endoplasmic reticulum membrane. The catalysed reaction is a 1-acyl-sn-glycero-3-phosphoethanolamine + an acyl-CoA = a 1,2-diacyl-sn-glycero-3-phosphoethanolamine + CoA. It catalyses the reaction a 1-O-(1Z-alkenyl)-sn-glycero-3-phosphoethanolamine + an acyl-CoA = a 1-O-(1Z-alkenyl)-2-acyl-sn-glycero-3-phosphoethanolamine + CoA. The enzyme catalyses a 1-acyl-sn-glycero-3-phosphocholine + an acyl-CoA = a 1,2-diacyl-sn-glycero-3-phosphocholine + CoA. It carries out the reaction a 1-O-alkyl-sn-glycero-3-phosphocholine + acetyl-CoA = a 1-O-alkyl-2-acetyl-sn-glycero-3-phosphocholine + CoA. The catalysed reaction is a 1-acyl-sn-glycero-3-phospho-L-serine + an acyl-CoA = a 1,2-diacyl-sn-glycero-3-phospho-L-serine + CoA. It catalyses the reaction octanoyl-CoA + a 1-acyl-sn-glycero-3-phosphoethanolamine = 1-acyl-2-octanoyl-sn-glycero-3-phosphoethanolamine + CoA. The enzyme catalyses a 1-acyl-sn-glycero-3-phosphoethanolamine + hexadecanoyl-CoA = 1-acyl-2-hexadecanoyl-sn-glycero-3-phosphoethanolamine + CoA. It carries out the reaction a 1-acyl-sn-glycero-3-phosphoethanolamine + octadecanoyl-CoA = 1-acyl-2-octadecanoyl-sn-glycero-3-phosphoethanolamine + CoA. The catalysed reaction is a 1-acyl-sn-glycero-3-phosphoethanolamine + (9Z)-octadecenoyl-CoA = 1-acyl-2-(9Z)-octadecenoyl-sn-glycero-3-phosphoethanolamine + CoA. It catalyses the reaction a 1-acyl-sn-glycero-3-phosphoethanolamine + (5Z,8Z,11Z,14Z)-eicosatetraenoyl-CoA = 1-acyl-2-(5Z,8Z,11Z,14Z)-eicosatetraenoyl-sn-glycero-3-phosphoethanolamine + CoA. The enzyme catalyses a 1-O-(1Z-alkenyl)-sn-glycero-3-phosphoethanolamine + octanoyl-CoA = 1-O-(1Z)-alkenyl-2-octanoyl-sn-glycero-3-phosphoethanolamine + CoA. It carries out the reaction a 1-O-(1Z-alkenyl)-sn-glycero-3-phosphoethanolamine + hexadecanoyl-CoA = 1-O-(1Z)-alkenyl-2-hexadecanoyl-sn-glycero-3-phosphoethanolamine + CoA. The catalysed reaction is a 1-O-(1Z-alkenyl)-sn-glycero-3-phosphoethanolamine + octadecanoyl-CoA = 1-O-(1Z)-alkenyl-2-octadecanoyl-sn-glycero-3-phosphoethanolamine + CoA. It catalyses the reaction a 1-O-(1Z-alkenyl)-sn-glycero-3-phosphoethanolamine + (9Z)-octadecenoyl-CoA = 1-O-(1Z)-alkenyl-2-(9Z)-octadecenoyl-sn-glycero-3-phosphoethanolamine + CoA. The enzyme catalyses a 1-O-(1Z-alkenyl)-sn-glycero-3-phosphoethanolamine + (5Z,8Z,11Z,14Z)-eicosatetraenoyl-CoA = 1-O-(1Z)-alkenyl-2-(5Z,8Z,11Z,14Z)-eicosatetraenoyl-sn-glycero-3-phosphoethanolamine + CoA. It carries out the reaction a 1-acyl-sn-glycero-3-phosphocholine + hexadecanoyl-CoA = 1-acyl-2-hexadecanoyl-sn-glycero-3-phosphocholine + CoA. The catalysed reaction is a 1-acyl-sn-glycero-3-phosphocholine + (9Z)-octadecenoyl-CoA = a 1-acyl-2-(9Z)-octadecenoyl-sn-glycero-3-phosphocholine + CoA. It catalyses the reaction 1-O-hexadecyl-sn-glycero-3-phosphocholine + (9Z)-octadecenoyl-CoA = 1-O-hexadecyl-2-(9Z)-octadecenoyl-sn-glycero-3-phosphocholine + CoA. The enzyme catalyses 1-O-hexadecyl-sn-glycero-3-phosphocholine + (5Z,8Z,11Z,14Z)-eicosatetraenoyl-CoA = 1-O-hexadecyl-2-(5Z,8Z,11Z,14Z)-eicosatetraenoyl-sn-glycero-3-phosphocholine + CoA. It carries out the reaction 1-hexadecanoyl-sn-glycero-3-phospho-L-serine + (9Z)-octadecenoyl-CoA = 1-hexadecanoyl-2-(9Z-octadecenoyl)-sn-glycero-3-phospho-L-serine + CoA. The catalysed reaction is 1-octadecanoyl-sn-glycero-3-phospho-(1'-sn-glycerol) + (9Z)-octadecenoyl-CoA = 1-octadecanoyl-2-(9Z-octadecenoyl)-sn-glycero-3-phospho-(1'-sn-glycerol) + CoA. It catalyses the reaction 1-octadecanoyl-sn-glycero-3-phospho-(1'-sn-glycerol) + (5Z,8Z,11Z,14Z)-eicosatetraenoyl-CoA = 1-octadecanoyl-2-(5Z,8Z,11Z,14Z-eicosatetraenoyl)-sn-glycero-3-phospho-(1'-sn-glycerol) + CoA. It participates in lipid metabolism; phospholipid metabolism. Displays acyl-CoA-dependent lysophospholipid acyltransferase activity with a subset of lysophospholipids as substrates; converts lysophosphatidylethanolamine to phosphatidylethanolamine, 1-alkenyl-lysophatidylethanolamine to 1-alkenyl-phosphatidylethanolamine, lysophosphatidylglycerol and alkyl-lysophosphatidylcholine to phosphatidylglycerol and alkyl-phosphatidylcholine, respectively. In contrast, has no lysophosphatidylinositol, glycerol-3-phosphate, diacylglycerol or lysophosphatidic acid acyltransferase activity. Prefers long chain acyl-CoAs (C16, C18) as acyl donors. Converts lysophosphatidylcholine to phosphatidycholine. This chain is Lysophospholipid acyltransferase LPCAT4 (Lpcat4), found in Mus musculus (Mouse).